We begin with the raw amino-acid sequence, 302 residues long: HPr kinase/phosphorylase (302 aa).

Active-site residues include His136 and Lys157. 151–158 contributes to the ATP binding site; that stretch reads GESGIGKS. Mg(2+) is bound at residue Ser158. Catalysis depends on Asp175, which acts as the Proton acceptor; for phosphorylation activity. Proton donor; for dephosphorylation activity. The important for the catalytic mechanism of both phosphorylation and dephosphorylation stretch occupies residues 198–207; that stretch reads LEVRGLGIID. Glu199 is a Mg(2+) binding site. The active site involves Arg240. The segment at 261–266 is important for the catalytic mechanism of dephosphorylation; that stretch reads PIRPGR.

Belongs to the HPrK/P family. As to quaternary structure, homohexamer. Mg(2+) is required as a cofactor.

The catalysed reaction is [HPr protein]-L-serine + ATP = [HPr protein]-O-phospho-L-serine + ADP + H(+). It carries out the reaction [HPr protein]-O-phospho-L-serine + phosphate + H(+) = [HPr protein]-L-serine + diphosphate. Catalyzes the ATP- as well as the pyrophosphate-dependent phosphorylation of a specific serine residue in HPr, a phosphocarrier protein of the phosphoenolpyruvate-dependent sugar phosphotransferase system (PTS). HprK/P also catalyzes the pyrophosphate-producing, inorganic phosphate-dependent dephosphorylation (phosphorolysis) of seryl-phosphorylated HPr (P-Ser-HPr). The two antagonistic activities of HprK/P are regulated by several intracellular metabolites, which change their concentration in response to the absence or presence of rapidly metabolisable carbon sources (glucose, fructose, etc.) in the growth medium. Therefore, by controlling the phosphorylation state of HPr, HPrK/P is a sensor enzyme that plays a major role in the regulation of carbon metabolism and sugar transport: it mediates carbon catabolite repression (CCR), and regulates PTS-catalyzed carbohydrate uptake and inducer exclusion. In Clostridium beijerinckii (strain ATCC 51743 / NCIMB 8052) (Clostridium acetobutylicum), this protein is HPr kinase/phosphorylase.